The chain runs to 632 residues: DNA topoisomerase 4 subunit B (632 aa).

Residues Tyr5, Asn42, Asp69, 110–116, and Lys334 contribute to the ATP site; that span reads GLHGVGI. A Toprim domain is found at 412–525; it reads TELFLVEGDS…DGHVYVAMPP (114 aa). Mg(2+) contacts are provided by Glu418, Asp490, and Asp492.

Belongs to the type II topoisomerase family. ParE type 1 subfamily. In terms of assembly, heterotetramer composed of ParC and ParE. The cofactor is Mg(2+). Mn(2+) is required as a cofactor. Requires Ca(2+) as cofactor.

It carries out the reaction ATP-dependent breakage, passage and rejoining of double-stranded DNA.. Functionally, topoisomerase IV is essential for chromosome segregation. It relaxes supercoiled DNA. Performs the decatenation events required during the replication of a circular DNA molecule. The protein is DNA topoisomerase 4 subunit B of Haemophilus influenzae (strain ATCC 51907 / DSM 11121 / KW20 / Rd).